The following is a 336-amino-acid chain: MDYPTLLLALLHVYRALCEEVLWHTSVPFAENMSLECVYPSVGILTQVEWFKIGTEKDSIAIFSPTHGMVIRKPYAERVYFLNSTMASNNMTLFFRNASEDDVGYYSCSLYTYPQGTWQKVIQVVQSDGFEAAVPPNSHIVSEPGKNITLTCQPQMTWPVQEVRWEKIQPHQIDLLTYCDLVHGRNFTSKFPRQIVSNCSHGSWSFIVVPDVTASDSGLYRCHLQASAGENETFVMRLTVAEGQTDNQYTRFVTGGTVLLLLFVISITTIIVIFLNRRRRRERSDLYTESWDTQKAPKNYRSPISASQPTNQSMDDTREDIYVNYPTFSRRPKTRV.

The signal sequence occupies residues 1–18 (MDYPTLLLALLHVYRALC). 2 consecutive Ig-like C2-type domains span residues 19 to 126 (EEVL…QVVQ) and 135 to 239 (PPNS…MRLT). Residues 19 to 254 (EEVLWHTSVP…TDNQYTRFVT (236 aa)) are Extracellular-facing. N-linked (GlcNAc...) asparagine glycans are attached at residues asparagine 32, asparagine 83, asparagine 90, asparagine 97, asparagine 147, asparagine 186, asparagine 198, and asparagine 231. An intrachain disulfide couples cysteine 37 to cysteine 108. 2 cysteine pairs are disulfide-bonded: cysteine 152/cysteine 222 and cysteine 179/cysteine 199. A helical membrane pass occupies residues 255-275 (GGTVLLLLFVISITTIIVIFL). Residues 276–336 (NRRRRRERSD…TFSRRPKTRV (61 aa)) are Cytoplasmic-facing. Residues 298–319 (KNYRSPISASQPTNQSMDDTRE) are disordered. Over residues 302 to 314 (SPISASQPTNQSM) the composition is skewed to polar residues. At tyrosine 322 the chain carries Phosphotyrosine.

Interacts with PVR and NECTIN2. Competes with PVRIG for NECTIN2-binding. Interacts with ITGAL; this interaction mediates CD226 localization to lipid rafts. Post-translationally, phosphorylated.

The protein resides in the cell membrane. Its function is as follows. Cell surface receptor that plays an important role in the immune system, particularly in intercellular adhesion, lymphocyte signaling, cytotoxicity and lymphokine secretion mediated by cytotoxic T-cells and NK cells. Functions as a costimulatory receptor upon recognition of target cells, such as virus-infected or tumor cells. Upon binding to its ligands PVR/CD155 or NECTIN2/CD112 on target cells, promotes the cytotoxic activity of NK cells and CTLs, enhancing their ability to kill these cells. Mechanistically, phosphorylation by Src kinases such as LYN of FYN, enables binding to adapter GRB2, leading to activation of VAV1, PI3K and PLCG1. Promotes also activation of kinases ERK and AKT, as well as calcium fluxes. The protein is CD226 antigen (CD226) of Macaca mulatta (Rhesus macaque).